A 251-amino-acid chain; its full sequence is Arginine and glutamate-rich protein 1-A (251 aa).

Positions 1–48 (MGRSRSRSSSRSKHSKHSRKRSRSKSKSKKRSRSKEPKRNRRSRSRSG) are enriched in basic residues. The tract at residues 1–53 (MGRSRSRSSSRSKHSKHSRKRSRSKSKSKKRSRSKEPKRNRRSRSRSGSRRDR) is necessary and sufficient for RNA binding. Disordered regions lie at residues 1 to 92 (MGRS…ERQR) and 215 to 251 (RMKL…KATE). Basic and acidic residues-rich tracts occupy residues 49–63 (SRRD…RTDM), 71–92 (RNND…ERQR), and 215–231 (RMKL…EEQK). Positions 54 to 251 (GGSPPDRTDM…RLSFSLKATE (198 aa)) are necessary and sufficient for transcriptional regulation.

It belongs to the ARGLU1 family.

Its subcellular location is the nucleus. It localises to the nucleus speckle. The protein resides in the chromosome. Dual function regulator of gene expression; regulator of transcription and modulator of alternative splicing. General coactivator of nuclear receptor-induced gene expression. The protein is Arginine and glutamate-rich protein 1-A (arglu1a) of Danio rerio (Zebrafish).